The sequence spans 100 residues: Probable antitoxin MazE1 (100 aa).

Positions 77 to 100 (PYESEAERSAARARRNARQQRSAQ) are disordered.

As to quaternary structure, forms a complex with cognate toxin MazF1.

In terms of biological role, probable antitoxin component of a type II toxin-antitoxin (TA) system. Labile antitoxin that binds to cognate MazF1 toxin and counteracts its endoribonuclease activity. This chain is Probable antitoxin MazE1 (mazE1), found in Mycobacterium bovis (strain ATCC BAA-935 / AF2122/97).